Reading from the N-terminus, the 398-residue chain is Large ribosomal subunit protein uL3 (398 aa).

Basic and acidic residues predominate over residues 1 to 10; that stretch reads MSHRKFEAPR. Residues 1 to 34 are disordered; the sequence is MSHRKFEAPRHGNLGFRPRKRAARHQGKVKSFPK. The span at 17 to 28 shows a compositional bias: basic residues; sequence RPRKRAARHQGK.

The protein belongs to the universal ribosomal protein uL3 family.

Its subcellular location is the cytoplasm. Its function is as follows. The L3 protein is a component of the large subunit of cytoplasmic ribosomes. This chain is Large ribosomal subunit protein uL3 (rpl3), found in Dictyostelium discoideum (Social amoeba).